A 243-amino-acid polypeptide reads, in one-letter code: Phosphatidylserine decarboxylase proenzyme (243 aa).

S212 serves as the catalytic Schiff-base intermediate with substrate; via pyruvic acid. S212 is modified (pyruvic acid (Ser); by autocatalysis).

It belongs to the phosphatidylserine decarboxylase family. PSD-A subfamily. In terms of assembly, heterodimer of a large membrane-associated beta subunit and a small pyruvoyl-containing alpha subunit. The cofactor is pyruvate. In terms of processing, is synthesized initially as an inactive proenzyme. Formation of the active enzyme involves a self-maturation process in which the active site pyruvoyl group is generated from an internal serine residue via an autocatalytic post-translational modification. Two non-identical subunits are generated from the proenzyme in this reaction, and the pyruvate is formed at the N-terminus of the alpha chain, which is derived from the carboxyl end of the proenzyme. The post-translation cleavage follows an unusual pathway, termed non-hydrolytic serinolysis, in which the side chain hydroxyl group of the serine supplies its oxygen atom to form the C-terminus of the beta chain, while the remainder of the serine residue undergoes an oxidative deamination to produce ammonia and the pyruvoyl prosthetic group on the alpha chain.

The protein resides in the cell membrane. The catalysed reaction is a 1,2-diacyl-sn-glycero-3-phospho-L-serine + H(+) = a 1,2-diacyl-sn-glycero-3-phosphoethanolamine + CO2. Its pathway is phospholipid metabolism; phosphatidylethanolamine biosynthesis; phosphatidylethanolamine from CDP-diacylglycerol: step 2/2. Catalyzes the formation of phosphatidylethanolamine (PtdEtn) from phosphatidylserine (PtdSer). The protein is Phosphatidylserine decarboxylase proenzyme of Mycobacterium leprae (strain Br4923).